A 53-amino-acid polypeptide reads, in one-letter code: Small ribosomal subunit protein uS14 (53 aa).

The Zn(2+) site is built by C18, C21, C36, and C39.

This sequence belongs to the universal ribosomal protein uS14 family. Zinc-binding uS14 subfamily. In terms of assembly, part of the 30S ribosomal subunit. Zn(2+) serves as cofactor.

In terms of biological role, binds 16S rRNA, required for the assembly of 30S particles. This Thermoplasma volcanium (strain ATCC 51530 / DSM 4299 / JCM 9571 / NBRC 15438 / GSS1) protein is Small ribosomal subunit protein uS14.